Reading from the N-terminus, the 823-residue chain is Trimethylamine-N-oxide reductase (823 aa).

The tat-type signal signal peptide spans 1 to 32 (MKQSRRQFLKNMSAMAATFAMPNFLIAQNAFA). Residue Ser181 coordinates Mo-bis(molybdopterin guanine dinucleotide).

This sequence belongs to the prokaryotic molybdopterin-containing oxidoreductase family. Mo-bis(molybdopterin guanine dinucleotide) is required as a cofactor. Predicted to be exported by the Tat system. The position of the signal peptide cleavage has not been experimentally proven.

Its subcellular location is the periplasm. The enzyme catalyses trimethylamine + 2 Fe(III)-[cytochrome c] + H2O = trimethylamine N-oxide + 2 Fe(II)-[cytochrome c] + 3 H(+). Functionally, reduces trimethylamine-N-oxide (TMAO) into trimethylamine; an anaerobic reaction coupled to energy-yielding reactions. The chain is Trimethylamine-N-oxide reductase (torA) from Pasteurella multocida (strain Pm70).